The sequence spans 274 residues: Penicillin-insensitive murein endopeptidase (274 aa).

Positions 1–19 are cleaved as a signal peptide; it reads MKKTVIALLAWFVSSASLA. 3 disulfides stabilise this stretch: Cys44–Cys265, Cys187–Cys235, and Cys216–Cys223. Zn(2+) is bound by residues His110, His113, Asp120, Asp147, His150, and His211. Positions 225 to 274 are disordered; sequence DQPLPPPGDGCGAELQSWFEPPKPGTTKPEKKTPPPLPPSCQALLDEHVL.

It belongs to the peptidase M74 family. In terms of assembly, dimer. Zn(2+) serves as cofactor.

It localises to the periplasm. Murein endopeptidase that cleaves the D-alanyl-meso-2,6-diamino-pimelyl amide bond that connects peptidoglycan strands. Likely plays a role in the removal of murein from the sacculus. This chain is Penicillin-insensitive murein endopeptidase, found in Salmonella paratyphi C (strain RKS4594).